Consider the following 641-residue polypeptide: Soluble starch synthase 1, chloroplastic/amyloplastic (641 aa).

Position 145 (Lys-145) interacts with ADP-alpha-D-glucose.

This sequence belongs to the glycosyltransferase 1 family. Bacterial/plant glycogen synthase subfamily. In terms of tissue distribution, high expression in leaves and very low in tubers.

The protein resides in the plastid. The protein localises to the chloroplast. It localises to the amyloplast. The catalysed reaction is [(1-&gt;4)-alpha-D-glucosyl](n) + ADP-alpha-D-glucose = [(1-&gt;4)-alpha-D-glucosyl](n+1) + ADP + H(+). Its pathway is glycan biosynthesis; starch biosynthesis. Its function is as follows. Plays a minor role in starch synthesis in storage organs (tubers), but may contribute to the deposition of transient starch in chloroplasts of leaves. The protein is Soluble starch synthase 1, chloroplastic/amyloplastic of Solanum tuberosum (Potato).